A 659-amino-acid polypeptide reads, in one-letter code: Centrosomal protein of 76 kDa (659 aa).

Phosphoserine is present on residues Ser75 and Ser83.

Belongs to the CEP76 family. In terms of assembly, interacts with CCP110 and CEP97.

Its subcellular location is the cytoplasm. The protein localises to the cytoskeleton. The protein resides in the microtubule organizing center. It is found in the centrosome. It localises to the centriole. Functionally, centrosomal protein involved in regulation of centriole duplication. Required to limit centriole duplication to once per cell cycle by preventing centriole reduplication. The chain is Centrosomal protein of 76 kDa (CEP76) from Homo sapiens (Human).